We begin with the raw amino-acid sequence, 336 residues long: Flavonoid 6-O-methyltransferase 4 (336 aa).

Residues tyrosine 140 and aspartate 203 each contribute to the S-adenosyl-L-methionine site. Histidine 241 serves as the catalytic Proton acceptor.

The protein belongs to the class I-like SAM-binding methyltransferase superfamily. Cation-independent O-methyltransferase family. Homodimer. As to expression, expressed in leaves.

The enzyme catalyses ladanein + S-adenosyl-L-methionine = salvigenin + S-adenosyl-L-homocysteine + H(+). It carries out the reaction scutellarein 7-methyl ether + S-adenosyl-L-methionine = cirsimaritin + S-adenosyl-L-homocysteine + H(+). The protein operates within flavonoid metabolism. Functionally, flavonoid 6-O-methyltransferase involved in the biosynthesis of polymethoxylated flavonoids natural products such as nevadensin and salvigenin (SALV), aroma compounds which contribute to the flavor of sweet basil, and exhibit pharmacological activities such as anti-allergic, anti-oxidant, antibacterial, anti-proliferative, and anti-inflammatory effects. Catalyzes S-adenosylmethionine-dependent regioselective 6-O-methylation of flavonoids; active on various hydroxylated flavonoid substrates, including scutellarein-7-methyl ether (SCU7Me) and ladanein (LAD). The polypeptide is Flavonoid 6-O-methyltransferase 4 (Ocimum basilicum (Sweet basil)).